The chain runs to 74 residues: High-potential iron-sulfur protein isozyme 2 (74 aa).

[4Fe-4S] cluster is bound by residues C36, C39, C53, and C67.

In terms of assembly, homodimer.

In terms of biological role, specific class of high-redox-potential 4Fe-4S ferredoxins. Functions in anaerobic electron transport in most purple and in some other photosynthetic bacteria and in at least one genus (Paracoccus) of halophilic, denitrifying bacteria. This Ectothiorhodospira mobilis protein is High-potential iron-sulfur protein isozyme 2.